The following is a 153-amino-acid chain: Catabolic 3-dehydroquinase (153 aa).

Tyrosine 24 acts as the Proton acceptor in catalysis. Substrate contacts are provided by asparagine 75, histidine 81, and aspartate 88. Residue histidine 101 is the Proton donor of the active site. Substrate is bound by residues 102-103 (VS) and arginine 112.

The protein belongs to the type-II 3-dehydroquinase family. Homododecamer. Adopts a ring-like structure, composed of an arrangement of two hexameric rings stacked on top of one another.

The catalysed reaction is 3-dehydroquinate = 3-dehydroshikimate + H2O. It functions in the pathway aromatic compound metabolism; 3,4-dihydroxybenzoate biosynthesis; 3,4-dihydroxybenzoate from 3-dehydroquinate: step 1/2. Its function is as follows. Is involved in the catabolism of quinate. Allows the utilization of quinate as carbon source via the beta-ketoadipate pathway. This Aspergillus oryzae (strain ATCC 42149 / RIB 40) (Yellow koji mold) protein is Catabolic 3-dehydroquinase.